Consider the following 1045-residue polypeptide: Elongation factor 3 (1045 aa).

ADP-binding residues include Ile42, His44, and Ser83. HEAT repeat units lie at residues 86–123, 125–162, 166–203, 171–209, 205–241, 242–279, and 285–323; these read PYVV…AVNP, AVKA…QAKS, LRMT…TVEN, LIPV…IERF, DIER…EVTP, ATLS…LVED, and PFLN…VGAV. Thr392 and His396 together coordinate ADP. ABC transporter domains are found at residues 426–641 and 667–993; these read EEGE…YYEL and VKVS…KKED. ADP contacts are provided by Asn703, Glu922, Asn925, and His951. Residues 975–1045 form a disordered region; sequence GHNWVSGQGS…AYVSDDDADF (71 aa). Residues 1020–1031 show a composition bias toward basic residues; that stretch reads RKKKKERMKKKK.

Belongs to the ABC transporter superfamily. ABCF family. EF3 subfamily.

It localises to the cytoplasm. The protein localises to the cytosol. The enzyme catalyses ATP + H2O = ADP + phosphate + H(+). The protein operates within protein biosynthesis; polypeptide chain elongation. In terms of biological role, ribosome-dependent ATPase that functions in cytoplasmic translation elongation. Required for the ATP-dependent release of deacylated tRNA from the ribosomal E-site during protein biosynthesis. Stimulates the eEF1A-dependent binding of aminoacyl-tRNA to the ribosomal A-site, which has reduced affinity for tRNA as long as the E-site is occupied. Assists translation termination by stimulating the release of nascent protein from the ribosome by release factors. This chain is Elongation factor 3, found in Zygosaccharomyces rouxii (strain ATCC 2623 / CBS 732 / NBRC 1130 / NCYC 568 / NRRL Y-229).